Consider the following 262-residue polypeptide: Steroid 5-alpha-reductase DET2 (262 aa).

The next 6 helical transmembrane spans lie at 13–33, 51–71, 79–99, 113–133, 148–168, and 205–225; these read CLLT…FLQA, IAWF…FPFG, SLLL…IYPL, FPIT…YIQA, WFWW…YINI, and AIEW…GFFL.

This sequence belongs to the steroid 5-alpha reductase family.

The protein resides in the membrane. The enzyme catalyses a 3-oxo-5alpha-steroid + NADP(+) = a 3-oxo-Delta(4)-steroid + NADPH + H(+). It catalyses the reaction 5alpha-campestan-3-one + NADP(+) = campest-4-en-3-one + NADPH + H(+). It carries out the reaction (22S,24R)-22-hydroxy-5alpha-ergostan-3-one + NADP(+) = (22S)-22-hydroxycampest-4-en-3-one + NADPH + H(+). The catalysed reaction is 3-dehydro-6-deoxoteasterone + NADP(+) = (22R,23R)-22,23-dihydroxycampest-4-en-3-one + NADPH + H(+). The protein operates within plant hormone biosynthesis; brassinosteroid biosynthesis. Inhibited by the 4-azasteroids 4-MA. In terms of biological role, involved in a reduction step in the biosynthesis of the plant steroid, brassinolide (BL); acts at the second step in brassinolide biosynthesis in the 5alpha-reduction of (24R)- 24-methylcholest-4-en-3-one, which is further modified to form campestanol. Can use progesterone, testosterone, androstenedione and campestenone as substrate. Also catalyzes the conversion of campest-4-en-3-one (campesta-4-en-3-one, 4-en-3-one) to campest-3-one (campesta-3-one, 3-one), of (22S,24R)-22-hydroxyergost-4-en-3-one (22-hydroxy-campesta-4-en-3-one, 22-OH-4-en-3-one) to (22S,24R)-22-hydroxy-5alpha-ergostan-3-one (22-hydroxy-campesta-3-one, 22-OH-3-one), and of (22R,23R)-22,23-dihydroxy-5alpha-campestan-3-one (22,23,diOH-4-en-3-one) to (22R,23R)-22,23-dihydroxycampest-4-en-3-one (6-deoxo3DT). Required for the brassinosteroid- (BR) dependent regulation of seed size and shape as well as embryo development. This chain is Steroid 5-alpha-reductase DET2, found in Arabidopsis thaliana (Mouse-ear cress).